The sequence spans 116 residues: Large ribosomal subunit protein bL19 (116 aa).

It belongs to the bacterial ribosomal protein bL19 family.

In terms of biological role, this protein is located at the 30S-50S ribosomal subunit interface and may play a role in the structure and function of the aminoacyl-tRNA binding site. The polypeptide is Large ribosomal subunit protein bL19 (rplS) (Streptomyces lividans).